A 175-amino-acid polypeptide reads, in one-letter code: Probable S-adenosyl-L-methionine-binding protein VirR (175 aa).

Positions 35–165 (LFFVGKIRTP…DRSLSKPLAP (131 aa)) constitute a TsaA-like domain. S-adenosyl-L-methionine-binding positions include 52–54 (PRQ), 90–91 (HE), Arg-114, Thr-124, and 145–148 (LDGT).

It belongs to the tRNA methyltransferase O family.

In Rhizobium radiobacter (Agrobacterium tumefaciens), this protein is Probable S-adenosyl-L-methionine-binding protein VirR (virR).